Consider the following 197-residue polypeptide: NADH-quinone oxidoreductase subunit C (197 aa).

Belongs to the complex I 30 kDa subunit family. In terms of assembly, NDH-1 is composed of 14 different subunits. Subunits NuoB, C, D, E, F, and G constitute the peripheral sector of the complex.

It is found in the cell inner membrane. The catalysed reaction is a quinone + NADH + 5 H(+)(in) = a quinol + NAD(+) + 4 H(+)(out). Its function is as follows. NDH-1 shuttles electrons from NADH, via FMN and iron-sulfur (Fe-S) centers, to quinones in the respiratory chain. The immediate electron acceptor for the enzyme in this species is believed to be ubiquinone. Couples the redox reaction to proton translocation (for every two electrons transferred, four hydrogen ions are translocated across the cytoplasmic membrane), and thus conserves the redox energy in a proton gradient. The sequence is that of NADH-quinone oxidoreductase subunit C from Neisseria meningitidis serogroup B (strain ATCC BAA-335 / MC58).